Consider the following 239-residue polypeptide: Norbelladine 4'-O-methyltransferase 2 (239 aa).

S-adenosyl-L-methionine contacts are provided by residues Val-55, Glu-77, Gly-79–Val-80, Ser-85, Asp-103, and Ala-132. Asp-155 provides a ligand contact to a divalent metal cation. An S-adenosyl-L-methionine-binding site is contributed by Asp-157. A divalent metal cation-binding residues include Asp-181 and Asn-182.

This sequence belongs to the class I-like SAM-binding methyltransferase superfamily. Cation-dependent O-methyltransferase family. It depends on Mg(2+) as a cofactor.

The enzyme catalyses norbelladine + S-adenosyl-L-methionine = 4'-O-methylnorbelladine + S-adenosyl-L-homocysteine + H(+). It participates in alkaloid biosynthesis. In terms of biological role, 4'-O-methyltransferase converting norbelladine to 4'-O-methylnorbelladine. 4'-O-methylnorbelladine is a precursor to all Amaryllidaceae alkaloids such as galanthamine, lycorine and haemanthamine, and including haemanthamine- and crinamine-type alkaloids, promising anticancer agents. The protein is Norbelladine 4'-O-methyltransferase 2 of Narcissus aff. pseudonarcissus MK-2014 (Daffodil).